The primary structure comprises 59 residues: UPF0391 membrane protein GbCGDNIH1_2123 (59 aa).

Transmembrane regions (helical) follow at residues 6–26 (LALF…TGIS) and 35–55 (ILFV…LAAG).

Belongs to the UPF0391 family.

It localises to the cell membrane. The chain is UPF0391 membrane protein GbCGDNIH1_2123 from Granulibacter bethesdensis (strain ATCC BAA-1260 / CGDNIH1).